We begin with the raw amino-acid sequence, 329 residues long: Beta-ketoacyl-[acyl-carrier-protein] synthase III (329 aa).

Residues cysteine 113 and histidine 256 contribute to the active site. The interval 257 to 261 is ACP-binding; it reads QANQR. Asparagine 286 is a catalytic residue.

The protein belongs to the thiolase-like superfamily. FabH family. Homodimer.

The protein resides in the cytoplasm. It carries out the reaction malonyl-[ACP] + acetyl-CoA + H(+) = 3-oxobutanoyl-[ACP] + CO2 + CoA. It functions in the pathway lipid metabolism; fatty acid biosynthesis. Catalyzes the condensation reaction of fatty acid synthesis by the addition to an acyl acceptor of two carbons from malonyl-ACP. Catalyzes the first condensation reaction which initiates fatty acid synthesis and may therefore play a role in governing the total rate of fatty acid production. Possesses both acetoacetyl-ACP synthase and acetyl transacylase activities. Its substrate specificity determines the biosynthesis of branched-chain and/or straight-chain of fatty acids. This Natranaerobius thermophilus (strain ATCC BAA-1301 / DSM 18059 / JW/NM-WN-LF) protein is Beta-ketoacyl-[acyl-carrier-protein] synthase III.